Here is an 802-residue protein sequence, read N- to C-terminus: Copper-exporting P-type ATPase (802 aa).

2 consecutive HMA domains span residues lysine 5 to threonine 70 and glutamate 72 to serine 138. Residues cysteine 16, cysteine 19, cysteine 83, and cysteine 86 each coordinate Cu(+). 6 consecutive transmembrane segments (helical) span residues leucine 161–asparagine 181, tryptophan 192–glycine 212, methionine 224–valine 244, leucine 256–alanine 276, tyrosine 411–valine 431, and proline 438–alanine 458. The active-site 4-aspartylphosphate intermediate is aspartate 495. Mg(2+)-binding residues include aspartate 690 and aspartate 694. 2 consecutive transmembrane segments (helical) span residues leucine 748–leucine 767 and valine 771–leucine 790.

This sequence belongs to the cation transport ATPase (P-type) (TC 3.A.3) family. Type IB subfamily.

It localises to the cell membrane. The catalysed reaction is Cu(+)(in) + ATP + H2O = Cu(+)(out) + ADP + phosphate + H(+). Involved in copper export. This Staphylococcus aureus (strain N315) protein is Copper-exporting P-type ATPase (copA).